Consider the following 192-residue polypeptide: Inosine triphosphate pyrophosphatase (192 aa).

Residue 11 to 16 coordinates ITP; it reads TGNKNK. Position 41 (glutamate 41) interacts with Mg(2+). ITP is bound by residues lysine 53, 69 to 70, lysine 86, 146 to 149, lysine 169, and 174 to 175; these read DT, FGWD, and HR.

This sequence belongs to the HAM1 NTPase family. Homodimer. It depends on Mg(2+) as a cofactor. Mn(2+) is required as a cofactor.

The protein localises to the cytoplasm. The enzyme catalyses ITP + H2O = IMP + diphosphate + H(+). The catalysed reaction is dITP + H2O = dIMP + diphosphate + H(+). It catalyses the reaction XTP + H2O = XMP + diphosphate + H(+). Pyrophosphatase that hydrolyzes non-canonical purine nucleotides such as inosine triphosphate (ITP), deoxyinosine triphosphate (dITP) or xanthosine 5'-triphosphate (XTP) to their respective monophosphate derivatives. The enzyme does not distinguish between the deoxy- and ribose forms. Probably excludes non-canonical purines from RNA and DNA precursor pools, thus preventing their incorporation into RNA and DNA and avoiding chromosomal lesions. The polypeptide is Inosine triphosphate pyrophosphatase (Ciona intestinalis (Transparent sea squirt)).